A 329-amino-acid chain; its full sequence is Phenylalanine--tRNA ligase alpha subunit (329 aa).

E254 is a Mg(2+) binding site.

Belongs to the class-II aminoacyl-tRNA synthetase family. Phe-tRNA synthetase alpha subunit type 1 subfamily. As to quaternary structure, tetramer of two alpha and two beta subunits. It depends on Mg(2+) as a cofactor.

The protein resides in the cytoplasm. The catalysed reaction is tRNA(Phe) + L-phenylalanine + ATP = L-phenylalanyl-tRNA(Phe) + AMP + diphosphate + H(+). The chain is Phenylalanine--tRNA ligase alpha subunit from Actinobacillus succinogenes (strain ATCC 55618 / DSM 22257 / CCUG 43843 / 130Z).